We begin with the raw amino-acid sequence, 162 residues long: Peptide deformylase-like (162 aa).

Belongs to the polypeptide deformylase family.

The sequence is that of Peptide deformylase-like from Staphylococcus aureus (strain MRSA252).